The chain runs to 35 residues: Pheromone-binding protein 1 (35 aa).

It belongs to the PBP/GOBP family. Homodimer. Antenna.

Its function is as follows. This major soluble protein in olfactory sensilla of male moths might serve to solubilize the extremely hydrophobic pheromone molecules and to transport pheromone through the aqueous lymph to receptors located on olfactory cilia. This is Pheromone-binding protein 1 from Lymantria dispar (Gypsy moth).